We begin with the raw amino-acid sequence, 359 residues long: Peptide chain release factor 1 (359 aa).

Glutamine 236 carries the post-translational modification N5-methylglutamine.

Belongs to the prokaryotic/mitochondrial release factor family. Methylated by PrmC. Methylation increases the termination efficiency of RF1.

It is found in the cytoplasm. Peptide chain release factor 1 directs the termination of translation in response to the peptide chain termination codons UAG and UAA. The sequence is that of Peptide chain release factor 1 (prfA) from Mycoplasma genitalium (strain ATCC 33530 / DSM 19775 / NCTC 10195 / G37) (Mycoplasmoides genitalium).